The primary structure comprises 846 residues: Sucrose synthase 6 (846 aa).

Positions 276–755 (CVFTVVIFSI…GLQRIYECYT (480 aa)) are GT-B glycosyltransferase.

Belongs to the glycosyltransferase 1 family. Plant sucrose synthase subfamily.

The catalysed reaction is an NDP-alpha-D-glucose + D-fructose = a ribonucleoside 5'-diphosphate + sucrose + H(+). Functionally, sucrose-cleaving enzyme that provides UDP-glucose and fructose for various metabolic pathways. The protein is Sucrose synthase 6 (SUS6) of Oryza sativa subsp. japonica (Rice).